We begin with the raw amino-acid sequence, 319 residues long: Acetyl-coenzyme A carboxylase carboxyl transferase subunit alpha (319 aa).

The CoA carboxyltransferase C-terminal domain occupies 32–293 (NVDIEVRALE…KAVLLNELEA (262 aa)).

This sequence belongs to the AccA family. As to quaternary structure, acetyl-CoA carboxylase is a heterohexamer composed of biotin carboxyl carrier protein (AccB), biotin carboxylase (AccC) and two subunits each of ACCase subunit alpha (AccA) and ACCase subunit beta (AccD).

It localises to the cytoplasm. It carries out the reaction N(6)-carboxybiotinyl-L-lysyl-[protein] + acetyl-CoA = N(6)-biotinyl-L-lysyl-[protein] + malonyl-CoA. Its pathway is lipid metabolism; malonyl-CoA biosynthesis; malonyl-CoA from acetyl-CoA: step 1/1. Its function is as follows. Component of the acetyl coenzyme A carboxylase (ACC) complex. First, biotin carboxylase catalyzes the carboxylation of biotin on its carrier protein (BCCP) and then the CO(2) group is transferred by the carboxyltransferase to acetyl-CoA to form malonyl-CoA. The protein is Acetyl-coenzyme A carboxylase carboxyl transferase subunit alpha of Xylella fastidiosa (strain Temecula1 / ATCC 700964).